Here is a 319-residue protein sequence, read N- to C-terminus: Acetyl-coenzyme A carboxylase carboxyl transferase subunit alpha (319 aa).

Residues 35–296 (NIDEEVHRLR…KAQLLADLAD (262 aa)) form the CoA carboxyltransferase C-terminal domain.

This sequence belongs to the AccA family. Acetyl-CoA carboxylase is a heterohexamer composed of biotin carboxyl carrier protein (AccB), biotin carboxylase (AccC) and two subunits each of ACCase subunit alpha (AccA) and ACCase subunit beta (AccD).

It is found in the cytoplasm. It catalyses the reaction N(6)-carboxybiotinyl-L-lysyl-[protein] + acetyl-CoA = N(6)-biotinyl-L-lysyl-[protein] + malonyl-CoA. The protein operates within lipid metabolism; malonyl-CoA biosynthesis; malonyl-CoA from acetyl-CoA: step 1/1. Functionally, component of the acetyl coenzyme A carboxylase (ACC) complex. First, biotin carboxylase catalyzes the carboxylation of biotin on its carrier protein (BCCP) and then the CO(2) group is transferred by the carboxyltransferase to acetyl-CoA to form malonyl-CoA. The sequence is that of Acetyl-coenzyme A carboxylase carboxyl transferase subunit alpha from Escherichia coli O139:H28 (strain E24377A / ETEC).